A 197-amino-acid polypeptide reads, in one-letter code: Small ribosomal subunit protein uS4A (197 aa).

The S4 RNA-binding domain occupies 107-181 (RRLQTQVYKL…VARRNAARKA (75 aa)). The interval 160 to 197 (PTSPFGGARPGRVARRNAARKAEASGEAADEADEADEE) is disordered. Residue K180 forms a Glycyl lysine isopeptide (Lys-Gly) (interchain with G-Cter in ubiquitin) linkage. S184 is modified (phosphoserine). Positions 187-197 (AADEADEADEE) are enriched in acidic residues.

Belongs to the universal ribosomal protein uS4 family. As to quaternary structure, component of the small ribosomal subunit (SSU). Mature yeast ribosomes consist of a small (40S) and a large (60S) subunit. The 40S small subunit contains 1 molecule of ribosomal RNA (18S rRNA) and 33 different proteins (encoded by 57 genes). The large 60S subunit contains 3 rRNA molecules (25S, 5.8S and 5S rRNA) and 46 different proteins (encoded by 81 genes). Interacts with snoRNA U3. uS11 interacts with MPP10. Component of the ribosomal small subunit (SSU) processome composed of at least 40 protein subunits and snoRNA U3.

The protein resides in the cytoplasm. It is found in the nucleus. The protein localises to the nucleolus. Component of the ribosome, a large ribonucleoprotein complex responsible for the synthesis of proteins in the cell. The small ribosomal subunit (SSU) binds messenger RNAs (mRNAs) and translates the encoded message by selecting cognate aminoacyl-transfer RNA (tRNA) molecules. The large subunit (LSU) contains the ribosomal catalytic site termed the peptidyl transferase center (PTC), which catalyzes the formation of peptide bonds, thereby polymerizing the amino acids delivered by tRNAs into a polypeptide chain. The nascent polypeptides leave the ribosome through a tunnel in the LSU and interact with protein factors that function in enzymatic processing, targeting, and the membrane insertion of nascent chains at the exit of the ribosomal tunnel. uS4 is involved in nucleolar processing of pre-18S ribosomal RNA and ribosome assembly. The chain is Small ribosomal subunit protein uS4A from Saccharomyces cerevisiae (strain ATCC 204508 / S288c) (Baker's yeast).